A 300-amino-acid chain; its full sequence is Lysenin-related protein 1 (300 aa).

The N-terminal cap domain stretch occupies residues 12-35 (EEIEVDVVSVWKEGYAYENRGNSS). The interval 36-109 (VQQKITMTKG…SQVIEHTVTI (74 aa)) is beta-hairpin domain. Residues 110–158 (PPNKKFTRWKLNADVGGTGIEYMYLIDEVTAIGADLTIPEVNKSRAKIL) are N-terminal cap domain. Positions 159–299 (VGRQIHLGET…EDKWILEVVN (141 aa)) are C-terminal receptor-binding domain. Residues Lys-187, Ser-229, Tyr-235, and Tyr-284 each coordinate an N-(acyl)-sphingosylphosphocholine. Cys-274 and Cys-285 are joined by a disulfide.

It belongs to the lysenin family. In terms of assembly, binds to sphingomyelin as a monomer by using its C-terminal domain. Forms a nonamer when sphingomyelin/LRP-1 ratio is lower than ca 500. Oligomerization, but not binding, is influenced by the fluidity of sphingomyelin. Expressed by coelomocytes.

The protein localises to the secreted. The protein resides in the target cell membrane. Pore-forming toxin that specifically binds sphingomyelin in the plasma membrane of various cells. Has hemolytic activity. Binding and hemolytic activities of this toxin are 10 times less than those of lysenin and lysenin-related protein 2. The polypeptide is Lysenin-related protein 1 (Eisenia fetida (Red wiggler worm)).